Reading from the N-terminus, the 132-residue chain is Protein NrdI (132 aa).

It belongs to the NrdI family.

In terms of biological role, probably involved in ribonucleotide reductase function. In Bartonella henselae (strain ATCC 49882 / DSM 28221 / CCUG 30454 / Houston 1) (Rochalimaea henselae), this protein is Protein NrdI.